The primary structure comprises 458 residues: tRNA-2-methylthio-N(6)-dimethylallyladenosine synthase (458 aa).

Residues 15-134 enclose the MTTase N-terminal domain; it reads KKVFIKTYGC…LPELLQQAQQ (120 aa). [4Fe-4S] cluster-binding residues include cysteine 24, cysteine 60, cysteine 97, cysteine 175, cysteine 179, and cysteine 182. The 233-residue stretch at 161-393 folds into the Radical SAM core domain; the sequence is QKRGVSAFLT…QALLLDQQHR (233 aa). Residues 396–457 form the TRAM domain; sequence RSKIGQTTDV…SNSFVGEKAN (62 aa).

It belongs to the methylthiotransferase family. MiaB subfamily. As to quaternary structure, monomer. It depends on [4Fe-4S] cluster as a cofactor.

Its subcellular location is the cytoplasm. The enzyme catalyses N(6)-dimethylallyladenosine(37) in tRNA + (sulfur carrier)-SH + AH2 + 2 S-adenosyl-L-methionine = 2-methylsulfanyl-N(6)-dimethylallyladenosine(37) in tRNA + (sulfur carrier)-H + 5'-deoxyadenosine + L-methionine + A + S-adenosyl-L-homocysteine + 2 H(+). Functionally, catalyzes the methylthiolation of N6-(dimethylallyl)adenosine (i(6)A), leading to the formation of 2-methylthio-N6-(dimethylallyl)adenosine (ms(2)i(6)A) at position 37 in tRNAs that read codons beginning with uridine. The polypeptide is tRNA-2-methylthio-N(6)-dimethylallyladenosine synthase (Bartonella bacilliformis (strain ATCC 35685 / KC583 / Herrer 020/F12,63)).